Here is a 271-residue protein sequence, read N- to C-terminus: ATP synthase subunit delta (271 aa).

Belongs to the ATPase delta chain family. In terms of assembly, F-type ATPases have 2 components, F(1) - the catalytic core - and F(0) - the membrane proton channel. F(1) has five subunits: alpha(3), beta(3), gamma(1), delta(1), epsilon(1). F(0) has three main subunits: a(1), b(2) and c(10-14). The alpha and beta chains form an alternating ring which encloses part of the gamma chain. F(1) is attached to F(0) by a central stalk formed by the gamma and epsilon chains, while a peripheral stalk is formed by the delta and b chains.

Its subcellular location is the cell membrane. In terms of biological role, f(1)F(0) ATP synthase produces ATP from ADP in the presence of a proton or sodium gradient. F-type ATPases consist of two structural domains, F(1) containing the extramembraneous catalytic core and F(0) containing the membrane proton channel, linked together by a central stalk and a peripheral stalk. During catalysis, ATP synthesis in the catalytic domain of F(1) is coupled via a rotary mechanism of the central stalk subunits to proton translocation. Functionally, this protein is part of the stalk that links CF(0) to CF(1). It either transmits conformational changes from CF(0) to CF(1) or is implicated in proton conduction. The chain is ATP synthase subunit delta from Corynebacterium kroppenstedtii (strain DSM 44385 / JCM 11950 / CIP 105744 / CCUG 35717).